Here is a 382-residue protein sequence, read N- to C-terminus: Cytochrome b (382 aa).

The next 4 membrane-spanning stretches (helical) occupy residues 33–53 (FGSLLGLCLASQIVTGLFLAM), 77–98 (WLVRNMHANGASFFFICLYTHI), 113–133 (WTVGVILLLLTMMTAFVGYVL), and 178–198 (FFAFHFLLPFVIAAFTAIHLL). The heme b site is built by His-83 and His-97. Heme b is bound by residues His-182 and His-196. His-201 contacts a ubiquinone. Helical transmembrane passes span 226-246 (LKDLLGFTILILTLTSVALLT), 288-308 (LGGVLALLASVLILATVPFLQ), 320-340 (LTQLVFWTLIANIAILTWIGG), and 347-367 (FVSIGQLASLAYFSIFLIIIP).

Belongs to the cytochrome b family. In terms of assembly, the cytochrome bc1 complex contains 3 respiratory subunits (MT-CYB, CYC1 and UQCRFS1), 2 core proteins (UQCRC1 and UQCRC2) and probably 6 low-molecular weight proteins. Heme b is required as a cofactor.

Its subcellular location is the mitochondrion inner membrane. In terms of biological role, component of the ubiquinol-cytochrome c reductase complex (complex III or cytochrome b-c1 complex) that is part of the mitochondrial respiratory chain. The b-c1 complex mediates electron transfer from ubiquinol to cytochrome c. Contributes to the generation of a proton gradient across the mitochondrial membrane that is then used for ATP synthesis. This chain is Cytochrome b (mt-cyb), found in Sigmops gracilis (Slender fangjaw).